The following is a 117-amino-acid chain: Large ribosomal subunit protein bL19 (117 aa).

This sequence belongs to the bacterial ribosomal protein bL19 family.

In terms of biological role, this protein is located at the 30S-50S ribosomal subunit interface and may play a role in the structure and function of the aminoacyl-tRNA binding site. This chain is Large ribosomal subunit protein bL19, found in Desulfosudis oleivorans (strain DSM 6200 / JCM 39069 / Hxd3) (Desulfococcus oleovorans).